A 152-amino-acid chain; its full sequence is Small integral membrane protein 28 (152 aa).

A helical transmembrane segment spans residues 52–72 (FLCILLPATILLFLAFLLLFL). Residues 117 to 152 (PLPPEATLPSQCLPPSYEEATRNPPGEEAQGCSPSV) are disordered.

The protein resides in the membrane. The polypeptide is Small integral membrane protein 28 (Homo sapiens (Human)).